Consider the following 1273-residue polypeptide: DNA-directed RNA polymerase subunit beta (1273 aa).

This sequence belongs to the RNA polymerase beta chain family. The RNAP catalytic core consists of 2 alpha, 1 beta, 1 beta' and 1 omega subunit. When a sigma factor is associated with the core the holoenzyme is formed, which can initiate transcription.

The enzyme catalyses RNA(n) + a ribonucleoside 5'-triphosphate = RNA(n+1) + diphosphate. Functionally, DNA-dependent RNA polymerase catalyzes the transcription of DNA into RNA using the four ribonucleoside triphosphates as substrates. In Phytoplasma mali (strain AT), this protein is DNA-directed RNA polymerase subunit beta.